The chain runs to 187 residues: Resolvase OPG149 (187 aa).

The protein belongs to the RuvC family. Poxviruses-type subfamily. Mg(2+) serves as cofactor.

In terms of biological role, plays a role in DNA replication by cleaving viral DNA concatamers to yield unit-length viral genomes. The concatamer junctions contain inverted repeat sequences that can be extruded as cruciforms, yielding Holliday junctions that A22 protein cleaves. This is Resolvase OPG149 (OPG149) from Vaccinia virus (strain Western Reserve) (VACV).